We begin with the raw amino-acid sequence, 205 residues long: Cryptic plasmid protein C (205 aa).

Positions 142 to 205 (THGYSDPDDP…RAGNAGKGRF (64 aa)) are disordered. Over residues 155–174 (QSMTQAKDLPRNTQEAAQSI) the composition is skewed to polar residues. Residues 189–205 (QAKKPRRRAGNAGKGRF) show a composition bias toward basic residues.

This is Cryptic plasmid protein C (cppC) from Neisseria gonorrhoeae.